A 66-amino-acid polypeptide reads, in one-letter code: Clarkitoxin-I-Mdum (66 aa).

4 disulfides stabilise this stretch: Cys3–Cys24, Cys17–Cys42, Cys46–Cys59, and Cys60–Cys65.

As to expression, expressed by the venom gland.

The protein resides in the secreted. In terms of biological role, no toxicity is observed upon intravenous or intracerebroventricular injection into mice. Has no cytotoxic activity towards C2C12 cells at 100 ug/ml. This is Clarkitoxin-I-Mdum from Micrurus dumerilii (Coral snake).